A 90-amino-acid polypeptide reads, in one-letter code: MRLYACCGLLLCPAYPQHFAHGYVDKIPGYPGRAGTLTGLHPMQVCRCRRPPHPVTFRRSSSTRCGFGAAPAFVCGRPVTGAARPDGGRM.

This is an uncharacterized protein from Escherichia coli O157:H7.